The following is a 662-amino-acid chain: Glycogen debranching enzyme (662 aa).

D338 serves as the catalytic Nucleophile. Catalysis depends on E373, which acts as the Proton donor.

Belongs to the glycosyl hydrolase 13 family.

It carries out the reaction Hydrolysis of (1-&gt;6)-alpha-D-glucosidic linkages to branches with degrees of polymerization of three or four glucose residues in limit dextrin.. It participates in glycan degradation; glycogen degradation. In terms of biological role, removes maltotriose and maltotetraose chains that are attached by 1,6-alpha-linkage to the limit dextrin main chain, generating a debranched limit dextrin. The protein is Glycogen debranching enzyme of Yersinia pseudotuberculosis serotype IB (strain PB1/+).